The chain runs to 369 residues: 4-hydroxy-3-methylbut-2-en-1-yl diphosphate synthase (flavodoxin) (369 aa).

C270, C273, C305, and E312 together coordinate [4Fe-4S] cluster.

It belongs to the IspG family. [4Fe-4S] cluster is required as a cofactor.

It carries out the reaction (2E)-4-hydroxy-3-methylbut-2-enyl diphosphate + oxidized [flavodoxin] + H2O + 2 H(+) = 2-C-methyl-D-erythritol 2,4-cyclic diphosphate + reduced [flavodoxin]. The protein operates within isoprenoid biosynthesis; isopentenyl diphosphate biosynthesis via DXP pathway; isopentenyl diphosphate from 1-deoxy-D-xylulose 5-phosphate: step 5/6. Its function is as follows. Converts 2C-methyl-D-erythritol 2,4-cyclodiphosphate (ME-2,4cPP) into 1-hydroxy-2-methyl-2-(E)-butenyl 4-diphosphate. This is 4-hydroxy-3-methylbut-2-en-1-yl diphosphate synthase (flavodoxin) from Haemophilus ducreyi (strain 35000HP / ATCC 700724).